The chain runs to 375 residues: Probable disease resistance protein At1g52660 (375 aa).

The 215-residue stretch at 158-372 (ENTGIIGLYG…LSNSPPNFSG (215 aa)) folds into the NB-ARC domain. 167–174 (GVEGVGKT) serves as a coordination point for ATP.

Its function is as follows. Possible disease resistance protein. The chain is Probable disease resistance protein At1g52660 from Arabidopsis thaliana (Mouse-ear cress).